A 185-amino-acid chain; its full sequence is Ribosome-recycling factor (185 aa).

This sequence belongs to the RRF family.

The protein localises to the cytoplasm. In terms of biological role, responsible for the release of ribosomes from messenger RNA at the termination of protein biosynthesis. May increase the efficiency of translation by recycling ribosomes from one round of translation to another. The chain is Ribosome-recycling factor from Streptococcus thermophilus (strain ATCC BAA-491 / LMD-9).